The chain runs to 845 residues: Protein translocase subunit SecA 1 (845 aa).

ATP contacts are provided by residues Q85, 103–107, and D492; that span reads GEGKT.

This sequence belongs to the SecA family. In terms of assembly, monomer and homodimer. Part of the essential Sec protein translocation apparatus which comprises SecA, SecYEG and auxiliary proteins SecDF. Other proteins may also be involved.

The protein localises to the cell membrane. It localises to the cytoplasm. The enzyme catalyses ATP + H2O + cellular proteinSide 1 = ADP + phosphate + cellular proteinSide 2.. In terms of biological role, part of the Sec protein translocase complex. Interacts with the SecYEG preprotein conducting channel. Has a central role in coupling the hydrolysis of ATP to the transfer of proteins into and across the cell membrane, serving as an ATP-driven molecular motor driving the stepwise translocation of polypeptide chains across the membrane. The polypeptide is Protein translocase subunit SecA 1 (Corynebacterium efficiens (strain DSM 44549 / YS-314 / AJ 12310 / JCM 11189 / NBRC 100395)).